The sequence spans 362 residues: Histidinol-phosphate aminotransferase (362 aa).

Position 218 is an N6-(pyridoxal phosphate)lysine (K218).

It belongs to the class-II pyridoxal-phosphate-dependent aminotransferase family. Histidinol-phosphate aminotransferase subfamily. In terms of assembly, homodimer. Pyridoxal 5'-phosphate is required as a cofactor.

The enzyme catalyses L-histidinol phosphate + 2-oxoglutarate = 3-(imidazol-4-yl)-2-oxopropyl phosphate + L-glutamate. The protein operates within amino-acid biosynthesis; L-histidine biosynthesis; L-histidine from 5-phospho-alpha-D-ribose 1-diphosphate: step 7/9. The protein is Histidinol-phosphate aminotransferase of Ruegeria sp. (strain TM1040) (Silicibacter sp.).